The primary structure comprises 348 residues: MKLSEFKFALPAELVAQHPAANRDEAKMMVINRATGTIEHKIFKDIINYFDEGDIMVMNNTKVFPARLYGNKEKTGAKIEVFLLRELNAELHLWDVLVDPARKIRVGNKLYFGESDLVAEVVDNTTSRGRTIRFLFDGNSEDFSKIIETIGETPLPRYIKRPIEEADKDRYQTIFAENKGAVAAPTAGLHFTKQVMKRMEIKGVNFAPLTLHVGLGSFRTVDVEDLTKHKMDSENFIIESTTADVVNKALDNKKRVCAIGTTSMRALESSVSANNRLKQNAGWTDRFIFPPYDFKIANCMLTNFHMPESTLYMMACAFGGYELMTKAYKTAIKEKYNFLSYGDVMLII.

The protein belongs to the QueA family. Monomer.

The protein resides in the cytoplasm. It carries out the reaction 7-aminomethyl-7-carbaguanosine(34) in tRNA + S-adenosyl-L-methionine = epoxyqueuosine(34) in tRNA + adenine + L-methionine + 2 H(+). Its pathway is tRNA modification; tRNA-queuosine biosynthesis. Transfers and isomerizes the ribose moiety from AdoMet to the 7-aminomethyl group of 7-deazaguanine (preQ1-tRNA) to give epoxyqueuosine (oQ-tRNA). The protein is S-adenosylmethionine:tRNA ribosyltransferase-isomerase of Cytophaga hutchinsonii (strain ATCC 33406 / DSM 1761 / CIP 103989 / NBRC 15051 / NCIMB 9469 / D465).